A 185-amino-acid chain; its full sequence is Elongation factor P (185 aa).

The protein belongs to the elongation factor P family.

It localises to the cytoplasm. The protein operates within protein biosynthesis; polypeptide chain elongation. Involved in peptide bond synthesis. Stimulates efficient translation and peptide-bond synthesis on native or reconstituted 70S ribosomes in vitro. Probably functions indirectly by altering the affinity of the ribosome for aminoacyl-tRNA, thus increasing their reactivity as acceptors for peptidyl transferase. In Desulfovibrio desulfuricans (strain ATCC 27774 / DSM 6949 / MB), this protein is Elongation factor P.